The sequence spans 308 residues: Ribosomal RNA small subunit methyltransferase H (308 aa).

S-adenosyl-L-methionine contacts are provided by residues 35–37, D54, F80, D101, and Q108; that span reads GGH.

Belongs to the methyltransferase superfamily. RsmH family.

Its subcellular location is the cytoplasm. The catalysed reaction is cytidine(1402) in 16S rRNA + S-adenosyl-L-methionine = N(4)-methylcytidine(1402) in 16S rRNA + S-adenosyl-L-homocysteine + H(+). Its function is as follows. Specifically methylates the N4 position of cytidine in position 1402 (C1402) of 16S rRNA. This chain is Ribosomal RNA small subunit methyltransferase H, found in Mycoplasma pneumoniae (strain ATCC 29342 / M129 / Subtype 1) (Mycoplasmoides pneumoniae).